The sequence spans 61 residues: Small ribosomal subunit protein uS14 (61 aa).

Positions 24, 27, 40, and 43 each coordinate Zn(2+).

This sequence belongs to the universal ribosomal protein uS14 family. Zinc-binding uS14 subfamily. Part of the 30S ribosomal subunit. Contacts proteins S3 and S10. Requires Zn(2+) as cofactor.

Binds 16S rRNA, required for the assembly of 30S particles and may also be responsible for determining the conformation of the 16S rRNA at the A site. This is Small ribosomal subunit protein uS14 from Spiroplasma citri.